Consider the following 245-residue polypeptide: tRNA1(Val) (adenine(37)-N6)-methyltransferase (245 aa).

This sequence belongs to the methyltransferase superfamily. tRNA (adenine-N(6)-)-methyltransferase family.

The protein resides in the cytoplasm. It carries out the reaction adenosine(37) in tRNA1(Val) + S-adenosyl-L-methionine = N(6)-methyladenosine(37) in tRNA1(Val) + S-adenosyl-L-homocysteine + H(+). Functionally, specifically methylates the adenine in position 37 of tRNA(1)(Val) (anticodon cmo5UAC). The protein is tRNA1(Val) (adenine(37)-N6)-methyltransferase of Escherichia coli O157:H7.